Here is a 221-residue protein sequence, read N- to C-terminus: Ubiquitin-conjugating enzyme E2 S (221 aa).

The UBC core domain maps to 11–157 (QVLRLVYKEV…AHLLTEIHAM (147 aa)). The active-site Glycyl thioester intermediate is cysteine 95. Residues 158 to 221 (GGTSGAPQEP…TDKKRALRRL (64 aa)) form a disordered region. The segment covering 193–206 (GTGTNNSNISNTNI) has biased composition (low complexity). The segment covering 208 to 221 (AKKKTDKKRALRRL) has biased composition (basic residues).

Belongs to the ubiquitin-conjugating enzyme family.

It carries out the reaction S-ubiquitinyl-[E1 ubiquitin-activating enzyme]-L-cysteine + [E2 ubiquitin-conjugating enzyme]-L-cysteine = [E1 ubiquitin-activating enzyme]-L-cysteine + S-ubiquitinyl-[E2 ubiquitin-conjugating enzyme]-L-cysteine.. Its pathway is protein modification; protein ubiquitination. In terms of biological role, catalyzes the covalent attachment of ubiquitin to other proteins. Acts as an essential factor of the anaphase promoting complex/cyclosome (APC/C), a cell cycle-regulated ubiquitin ligase that controls progression through mitosis. Acts by specifically elongating 'Lys-11'-linked polyubiquitin chains initiated by the E2 enzyme ube2c/ubch10 on APC/C substrates, enhancing the degradation of APC/C substrates by the proteasome and promoting mitotic exit. This is Ubiquitin-conjugating enzyme E2 S (ube2s) from Danio rerio (Zebrafish).